The chain runs to 237 residues: 7-cyano-7-deazaguanine synthase (237 aa).

9–19 (YSGGLDSTTCL) serves as a coordination point for ATP. Residues cysteine 189, cysteine 199, cysteine 202, and cysteine 205 each contribute to the Zn(2+) site.

The protein belongs to the QueC family. Zn(2+) serves as cofactor.

The catalysed reaction is 7-carboxy-7-deazaguanine + NH4(+) + ATP = 7-cyano-7-deazaguanine + ADP + phosphate + H2O + H(+). The protein operates within purine metabolism; 7-cyano-7-deazaguanine biosynthesis. Its function is as follows. Catalyzes the ATP-dependent conversion of 7-carboxy-7-deazaguanine (CDG) to 7-cyano-7-deazaguanine (preQ(0)). This is 7-cyano-7-deazaguanine synthase from Geobacter sulfurreducens (strain ATCC 51573 / DSM 12127 / PCA).